The following is a 203-amino-acid chain: UPF0637 protein Sca_0732 (203 aa).

Belongs to the UPF0637 family.

In Staphylococcus carnosus (strain TM300), this protein is UPF0637 protein Sca_0732.